Reading from the N-terminus, the 297-residue chain is MAALRQIAFYGKGGIGKSTTSQNTLAALVDLGQKILIVGCDPKADSTRLILNAKAQDTVLHLAATEGSVEDLELEDVLKVGYRGIKCVESGGPEPGVGCAGRGVITSINFLEENGAYNDVDYVSYDVLGDVVCGGFAMPIRENKAQEIYIVMSGEMMALYAANNIAKGILKYAHAGGVRLGGLICNERQTDRELDLAEALAARLNSKLIHFVPRDNIVQHAELRKMTVIQYAPNSKQAGEYRALAEKIHANSGRGTVPTPITMEELEDMLLDFGIMKSDEQMLAELHAKEAKVIAPH.

11 to 18 is a binding site for ATP; sequence GKGGIGKS. Cys-99 serves as a coordination point for [4Fe-4S] cluster. Arg-102 is modified (ADP-ribosylarginine; by dinitrogenase reductase ADP-ribosyltransferase). A [4Fe-4S] cluster-binding site is contributed by Cys-133.

This sequence belongs to the NifH/BchL/ChlL family. As to quaternary structure, homodimer. Requires [4Fe-4S] cluster as cofactor. Post-translationally, the reversible ADP-ribosylation of Arg-102 inactivates the nitrogenase reductase and regulates nitrogenase activity.

The catalysed reaction is N2 + 8 reduced [2Fe-2S]-[ferredoxin] + 16 ATP + 16 H2O = H2 + 8 oxidized [2Fe-2S]-[ferredoxin] + 2 NH4(+) + 16 ADP + 16 phosphate + 6 H(+). Its function is as follows. The key enzymatic reactions in nitrogen fixation are catalyzed by the nitrogenase complex, which has 2 components: the iron protein and the molybdenum-iron protein. The sequence is that of Nitrogenase iron protein (nifH) from Rhizobium meliloti (strain 1021) (Ensifer meliloti).